The sequence spans 86 residues: Small ribosomal subunit protein uS17 (86 aa).

The protein belongs to the universal ribosomal protein uS17 family. In terms of assembly, part of the 30S ribosomal subunit.

One of the primary rRNA binding proteins, it binds specifically to the 5'-end of 16S ribosomal RNA. This Caldicellulosiruptor bescii (strain ATCC BAA-1888 / DSM 6725 / KCTC 15123 / Z-1320) (Anaerocellum thermophilum) protein is Small ribosomal subunit protein uS17.